The primary structure comprises 148 residues: Cysteine proteinase inhibitor 5 (148 aa).

The first 25 residues, 1–25 (MASKLYYAVAPLVLVLLLLAPLSSA), serve as a signal peptide directing secretion. The short motif at 99-103 (QVVSG) is the Secondary area of contact element.

This sequence belongs to the cystatin family. Phytocystatin subfamily.

The protein resides in the secreted. In terms of biological role, specific inhibitor of cysteine proteinases. Probably involved in the regulation of endogenous processes and in defense against pests and pathogens. The protein is Cysteine proteinase inhibitor 5 of Oryza sativa subsp. japonica (Rice).